Reading from the N-terminus, the 84-residue chain is uncharacterized protein (84 aa).

This is an uncharacterized protein from Bos taurus (Bovine).